The chain runs to 187 residues: Peptidoglycan-recognition protein 3 (187 aa).

The signal sequence occupies residues 1–19 (MKAFLVALLISIELALVFA). Intrachain disulfides connect Cys21-Cys144 and Cys58-Cys64. The N-acetylmuramoyl-L-alanine amidase domain maps to 43-170 (KPLKYVIINH…RTIRQTNSPG (128 aa)). Asn51 carries an N-linked (GlcNAc...) asparagine glycan.

This sequence belongs to the N-acetylmuramoyl-L-alanine amidase 2 family.

It is found in the secreted. Its function is as follows. Peptidoglycan-recognition protein probably involved in innate immunity by binding to peptidoglycans (PGN) of bacteria and activating the prophenoloxidase (proPO) cascade immune response. Binds to 1,3-beta-D-glucan and PGN. The protein is Peptidoglycan-recognition protein 3 (PGRP-3) of Holotrichia diomphalia (Korean black chafer).